The following is a 340-amino-acid chain: S-adenosylmethionine:tRNA ribosyltransferase-isomerase (340 aa).

It belongs to the QueA family. As to quaternary structure, monomer.

The protein resides in the cytoplasm. It catalyses the reaction 7-aminomethyl-7-carbaguanosine(34) in tRNA + S-adenosyl-L-methionine = epoxyqueuosine(34) in tRNA + adenine + L-methionine + 2 H(+). The protein operates within tRNA modification; tRNA-queuosine biosynthesis. In terms of biological role, transfers and isomerizes the ribose moiety from AdoMet to the 7-aminomethyl group of 7-deazaguanine (preQ1-tRNA) to give epoxyqueuosine (oQ-tRNA). The polypeptide is S-adenosylmethionine:tRNA ribosyltransferase-isomerase (Francisella tularensis subsp. holarctica (strain OSU18)).